Consider the following 203-residue polypeptide: dITP/XTP pyrophosphatase (203 aa).

Position 7–12 (7–12) interacts with substrate; that stretch reads SGNLHK. Mg(2+) contacts are provided by E47 and D77. D77 functions as the Proton acceptor in the catalytic mechanism. Residues S78, 160-163, K183, and 188-189 each bind substrate; these read FGYD and HR.

Belongs to the HAM1 NTPase family. Homodimer. It depends on Mg(2+) as a cofactor.

The catalysed reaction is XTP + H2O = XMP + diphosphate + H(+). It carries out the reaction dITP + H2O = dIMP + diphosphate + H(+). The enzyme catalyses ITP + H2O = IMP + diphosphate + H(+). Functionally, pyrophosphatase that catalyzes the hydrolysis of nucleoside triphosphates to their monophosphate derivatives, with a high preference for the non-canonical purine nucleotides XTP (xanthosine triphosphate), dITP (deoxyinosine triphosphate) and ITP. Seems to function as a house-cleaning enzyme that removes non-canonical purine nucleotides from the nucleotide pool, thus preventing their incorporation into DNA/RNA and avoiding chromosomal lesions. This is dITP/XTP pyrophosphatase from Opitutus terrae (strain DSM 11246 / JCM 15787 / PB90-1).